Reading from the N-terminus, the 214-residue chain is MISILGLDGFLQLVGMITIAIFALAFISFILILIISYILLKKNKLIFPSLALFLMDNLYSILLKIFLLIGTEDTFYRVGIEFYNKYYEDRFKKAKKRVLILPHCLRDTKCPAKLTPKGVECIFCNRCRVGEIIKVAEEKGYKVYIVPGSTFLKRILKEEKPEAVFGVACNRDLFYGMNMLSRKGIPSQGQPLLRDGCINTLVDVDELITRLKSL.

Helical transmembrane passes span 19–39 and 50–70; these read IAIFALAFISFILILIISYIL and LALFLMDNLYSILLKIFLLIG.

It localises to the cell membrane. This is an uncharacterized protein from Methanocaldococcus jannaschii (strain ATCC 43067 / DSM 2661 / JAL-1 / JCM 10045 / NBRC 100440) (Methanococcus jannaschii).